The sequence spans 276 residues: Dermonecrotic toxin LlSicTox-alphaIV1i (276 aa).

The active site involves H5. Mg(2+) contacts are provided by E25 and D27. H41 serves as the catalytic Nucleophile. Intrachain disulfides connect C45–C51 and C47–C193. D85 is a binding site for Mg(2+).

Belongs to the arthropod phospholipase D family. Class II subfamily. Mg(2+) is required as a cofactor. As to expression, expressed by the venom gland.

The protein resides in the secreted. It carries out the reaction an N-(acyl)-sphingosylphosphocholine = an N-(acyl)-sphingosyl-1,3-cyclic phosphate + choline. The enzyme catalyses an N-(acyl)-sphingosylphosphoethanolamine = an N-(acyl)-sphingosyl-1,3-cyclic phosphate + ethanolamine. The catalysed reaction is a 1-acyl-sn-glycero-3-phosphocholine = a 1-acyl-sn-glycero-2,3-cyclic phosphate + choline. It catalyses the reaction a 1-acyl-sn-glycero-3-phosphoethanolamine = a 1-acyl-sn-glycero-2,3-cyclic phosphate + ethanolamine. In terms of biological role, dermonecrotic toxins cleave the phosphodiester linkage between the phosphate and headgroup of certain phospholipids (sphingolipid and lysolipid substrates), forming an alcohol (often choline) and a cyclic phosphate. This toxin acts on sphingomyelin (SM). It may also act on ceramide phosphoethanolamine (CPE), lysophosphatidylcholine (LPC) and lysophosphatidylethanolamine (LPE), but not on lysophosphatidylserine (LPS), and lysophosphatidylglycerol (LPG). It acts by transphosphatidylation, releasing exclusively cyclic phosphate products as second products. Induces dermonecrosis, hemolysis, increased vascular permeability, edema, inflammatory response, and platelet aggregation. The protein is Dermonecrotic toxin LlSicTox-alphaIV1i of Loxosceles laeta (South American recluse spider).